Reading from the N-terminus, the 156-residue chain is RNA polymerase sigma factor SigS (156 aa).

Residues Glu-29–Ile-44 carry the Polymerase core binding motif. The H-T-H motif DNA-binding region spans Gln-126–Thr-145.

The protein belongs to the sigma-70 factor family.

Sigma factors are initiation factors that promote the attachment of RNA polymerase to specific initiation sites and are then released. Sigma-S contributes to the protection against external stress, thus playing a role in cellular fitness and survival. In Staphylococcus aureus (strain bovine RF122 / ET3-1), this protein is RNA polymerase sigma factor SigS (sigS).